The primary structure comprises 101 residues: Small ribosomal subunit protein uS14 (101 aa).

Belongs to the universal ribosomal protein uS14 family. Part of the 30S ribosomal subunit. Contacts proteins S3 and S10.

In terms of biological role, binds 16S rRNA, required for the assembly of 30S particles and may also be responsible for determining the conformation of the 16S rRNA at the A site. This is Small ribosomal subunit protein uS14 from Alkalilimnicola ehrlichii (strain ATCC BAA-1101 / DSM 17681 / MLHE-1).